A 1107-amino-acid polypeptide reads, in one-letter code: DNA polymerase delta catalytic subunit (1107 aa).

The segment at 1 to 34 (MDGKRRPGPGPGVPPKRARGGLWDDDDAPRPSQF) is disordered. The short motif at 4-19 (KRRPGPGPGVPPKRAR) is the Nuclear localization signal element. R19 carries the omega-N-methylarginine modification. A Glycyl lysine isopeptide (Lys-Gly) (interchain with G-Cter in SUMO2) cross-link involves residue K574. Residues C1012, C1015, C1026, and C1029 each coordinate Zn(2+). The segment at 1012–1029 (CIGCRTVLSHQGAVCEFC) adopts a CysA-type zinc-finger fold. [4Fe-4S] cluster is bound by residues C1058, C1061, C1071, and C1076. The CysB motif motif lies at 1058–1076 (CQRCQGSLHEDVICTSRDC).

The protein belongs to the DNA polymerase type-B family. In terms of assembly, component of the tetrameric DNA polymerase delta complex (Pol-delta4), which consists of POLD1/p125, POLD2/p50, POLD3/p66/p68 and POLD4/p12, with POLD1 bearing both DNA polymerase and 3' to 5' proofreading exonuclease activities. Within Pol-delta4, directly interacts with POLD2 and POLD4. Following genotoxic stress by DNA-damaging agents, such as ultraviolet light and methyl methanesulfonate, or by replication stress induced by treatment with hydroxyurea or aphidicolin, Pol-delta4 is converted into a trimeric form of the complex (Pol-delta3) by POLD4 degradation. Pol-delta3 is the major form at S phase replication sites and DNA damage sites. POLD1 displays different catalytic properties depending upon the complex it is found in. It exhibits higher proofreading activity and fidelity than Pol-delta4, making it particularly well suited to respond to DNA damage. Directly interacts with PCNA, as do POLD3 and POLD4; this interaction stimulates Pol-delta4 polymerase activity. As POLD2 and POLD4, directly interacts with WRNIP1; this interaction stimulates DNA polymerase delta-mediated DNA synthesis, independently of the presence of PCNA. This stimulation may be due predominantly to an increase of initiation frequency and also to increased processivity. Also observed as a dimeric complex with POLD2 (Pol-delta2 complex). Pol-delta2 is relatively insensitive to the PCNA stimulation (2-5-fold) compared to Pol-delta4 that is stimulated by over 50-fold. The DNA polymerase delta complex interacts with POLDIP2; this interaction is probably mediated through direct binding to POLD2. Interacts with CIAO1. Interacts with POLDIP2. Interacts with RFC1. [4Fe-4S] cluster is required as a cofactor. As to expression, widely expressed, with high levels of expression in heart and lung.

It is found in the nucleus. The enzyme catalyses DNA(n) + a 2'-deoxyribonucleoside 5'-triphosphate = DNA(n+1) + diphosphate. Its activity is regulated as follows. Regulated by alteration of quaternary structure. Exhibits burst rates of DNA synthesis are about 5 times faster in the presence of POLD4 (Pol-delta4 complex) than in its absence (Pol-delta3 complex), while the affinity of the enzyme for its DNA and dNTP substrates appears unchanged. The Pol-delta3 complex is more likely to proofread DNA synthesis because it cleaves single-stranded DNA twice as fast and transfers mismatched DNA from the polymerase to the exonuclease sites 9 times faster compared to the Pol-delta3 complex. Pol-delta3 also extends mismatched primers 3 times more slowly in the absence of POLD4. The conversion of Pol-delta4 into Pol-delta3 is induced by genotoxic stress or by replication stress leading POLD4 degradation. Stimulated in the presence of PCNA. This stimulation is further increased in the presence of KCTD13/PDIP1, most probably via direct interaction between KCTD13 and POLD2. Its function is as follows. As the catalytic component of the trimeric (Pol-delta3 complex) and tetrameric DNA polymerase delta complexes (Pol-delta4 complex), plays a crucial role in high fidelity genome replication, including in lagging strand synthesis, and repair. Exhibits both DNA polymerase and 3'- to 5'-exonuclease activities. Requires the presence of accessory proteins POLD2, POLD3 and POLD4 for full activity. Depending upon the absence (Pol-delta3) or the presence of POLD4 (Pol-delta4), displays differences in catalytic activity. Most notably, expresses higher proofreading activity in the context of Pol-delta3 compared with that of Pol-delta4. Although both Pol-delta3 and Pol-delta4 process Okazaki fragments in vitro, Pol-delta3 may be better suited to fulfill this task, exhibiting near-absence of strand displacement activity compared to Pol-delta4 and stalling on encounter with the 5'-blocking oligonucleotides. Pol-delta3 idling process may avoid the formation of a gap, while maintaining a nick that can be readily ligated. Along with DNA polymerase kappa, DNA polymerase delta carries out approximately half of nucleotide excision repair (NER) synthesis following UV irradiation. Under conditions of DNA replication stress, in the presence of POLD3 and POLD4, may catalyze the repair of broken replication forks through break-induced replication (BIR). Involved in the translesion synthesis (TLS) of templates carrying O6-methylguanine, 8oxoG or abasic sites. The polypeptide is DNA polymerase delta catalytic subunit (Homo sapiens (Human)).